We begin with the raw amino-acid sequence, 78 residues long: Gas vesicle protein A (78 aa).

This sequence belongs to the gas vesicle GvpA family. The gas vesicle shell is 2 nm thick and consists of a single layer of this protein. It forms helical ribs nearly perpendicular to the long axis of the vesicle.

It localises to the gas vesicle shell. Functionally, gas vesicles are hollow, gas filled proteinaceous nanostructures found in some microorganisms. During planktonic growth they allow positioning of the organism at a favorable depth for light or nutrient acquisition. GvpA forms the protein shell. The chain is Gas vesicle protein A from Halorubrum vacuolatum (Natronobacterium vacuolatum).